The primary structure comprises 515 residues: Vacuolar segregation protein PEP7 (515 aa).

A C2H2-type zinc finger spans residues 6-29 (VSCPICLRKFDNLQALNAHLDVEH). Residues 36–58 (DSLGSNDSRLVNGKQKKARSVDS) form a disordered region. The FYVE-type 1; atypical zinc finger occupies 72 to 137 (KKGKSCCHTC…CCHDCFVTKP (66 aa)). Cysteine 78, cysteine 81, cysteine 94, cysteine 97, cysteine 102, histidine 105, cysteine 129, cysteine 132, cysteine 221, cysteine 224, cysteine 237, cysteine 240, cysteine 245, cysteine 252, cysteine 289, and cysteine 292 together coordinate Zn(2+). The FYVE-type 2 zinc-finger motif lies at 215-297 (DRSVLFCNIC…LCSHCIDMLF (83 aa)).

As to quaternary structure, interacts with VPS21, VPS45, PEP3 and PEP5.

Its subcellular location is the vacuole membrane. In terms of biological role, required for vacuole segregation and vacuole protein sorting. Possibly part of a complex which tethers the vacuole membrane to microtubules, either directly or via kinesin or dynein-like motor proteins. Probably functions in several interorganelle traffic pathways. The polypeptide is Vacuolar segregation protein PEP7 (PEP7) (Saccharomyces cerevisiae (strain ATCC 204508 / S288c) (Baker's yeast)).